The sequence spans 369 residues: tRNA-specific 2-thiouridylase MnmA (369 aa).

ATP-binding positions include 11-18 (GMSGGVDS) and Met-37. An interaction with target base in tRNA region spans residues 97–99 (NPD). The active-site Nucleophile is Cys-102. Cys-102 and Cys-199 are oxidised to a cystine. Residue Gly-127 coordinates ATP. An interaction with tRNA region spans residues 149-151 (KDQ). The active-site Cysteine persulfide intermediate is the Cys-199. Residues 311-312 (RY) form an interaction with tRNA region.

Belongs to the MnmA/TRMU family. In terms of assembly, interacts with TusE.

It localises to the cytoplasm. The enzyme catalyses S-sulfanyl-L-cysteinyl-[protein] + uridine(34) in tRNA + AH2 + ATP = 2-thiouridine(34) in tRNA + L-cysteinyl-[protein] + A + AMP + diphosphate + H(+). Catalyzes the 2-thiolation of uridine at the wobble position (U34) of tRNA(Lys), tRNA(Glu) and tRNA(Gln), leading to the formation of s(2)U34, the first step of tRNA-mnm(5)s(2)U34 synthesis. Sulfur is provided by IscS, via a sulfur-relay system. Binds ATP and its substrate tRNAs. The polypeptide is tRNA-specific 2-thiouridylase MnmA (Enterobacter sp. (strain 638)).